The chain runs to 815 residues: Patatin-like phospholipase domain-containing protein LELG_00944 (815 aa).

The span at 41–50 (VSTTAPTTPL) shows a compositional bias: polar residues. 2 disordered regions span residues 41–105 (VSTT…PQLK) and 140–166 (SENLNPNSKRTKFAKSSKSSKSKSTSP). Over residues 54-73 (LDMGDLSLLGGELGNGSDDV) the composition is skewed to low complexity. Over residues 74 to 94 (VVGDDDDDDDDDDDDDDDDDD) the composition is skewed to acidic residues. A compositionally biased stretch (basic residues) spans 148 to 160 (KRTKFAKSSKSSK). A helical membrane pass occupies residues 185 to 205 (WPILTFVVIWVTILGFLYLAV). The PNPLA domain occupies 360 to 552 (LCLSGGACFA…RTDIPIDALN (193 aa)). The GXSXG signature appears at 391-395 (GTSGG). Serine 393 serves as the catalytic Nucleophile. Aspartate 539 serves as the catalytic Proton acceptor. Residues 753–815 (GSTLRDDDAD…LTKERRHTVY (63 aa)) form a disordered region. Positions 759–799 (DDADADVDEDDNEDEDEEDEDENDYEEYDVEDLDDPYESDA) are enriched in acidic residues.

It belongs to the PLPL family.

The protein localises to the membrane. Functionally, probable lipid hydrolase. In Lodderomyces elongisporus (strain ATCC 11503 / CBS 2605 / JCM 1781 / NBRC 1676 / NRRL YB-4239) (Yeast), this protein is Patatin-like phospholipase domain-containing protein LELG_00944.